A 346-amino-acid polypeptide reads, in one-letter code: uncharacterized protein (346 aa).

Residues 7 to 27 form a helical membrane-spanning segment; the sequence is AMVILLIICGTYVLFIQYGSV. Residues 29 to 48 form a disordered region; the sequence is EKKSNDSEPQVSNEEAQSGK. Polar residues predominate over residues 35–44; that stretch reads SEPQVSNEEA. Residues 231–342 enclose the SCP domain; sequence LDLTNVIRVK…VDRKYYTQNF (112 aa).

The protein localises to the cell membrane. This is an uncharacterized protein from Bacillus subtilis (strain 168).